Consider the following 226-residue polypeptide: Transmembrane gamma-carboxyglutamic acid protein 4 (226 aa).

The N-terminal stretch at 1 to 17 (MFPLLIVLSQLPRLTLA) is a signal peptide. The propeptide occupies 18–49 (VPHCIRSLKDSEHAPEEVFASKEAANIFMHRR). The Extracellular portion of the chain corresponds to 50 to 113 (LLNNRFDLEL…GSDVNKEKID (64 aa)). A Gla domain is found at 52–98 (NNRFDLELFTPGDLERECYEEFCSYEEAREILGDDENTIKFWQTYSI). C69 and C74 are oxidised to a cystine. 4-carboxyglutamate is present on E72. The helical transmembrane segment at 114 to 134 (VMSLLTGLIVAGVFLVIFGLV) threads the bilayer. At 135-226 (GYYVCLTKCK…FKKSMSLPSH (92 aa)) the chain is on the cytoplasmic side. Position 164 is a phosphoserine (S164). The short motif at 186–189 (LPSY) is the LPXY motif; mediates binding to WW domain-containing proteins element. Residues 204-207 (PPPY) carry the PPXY motif; mediates binding to WW domain-containing proteins motif.

The protein belongs to the commissureless family. Interacts (via cytoplasmic domain) with WW domain-containing proteins MAGI1, MAGI3, NEDD4, NEDD4L, WWTR1/TAZ and YAP1. In terms of processing, gamma-carboxyglutamate residues are formed by vitamin K dependent carboxylation. These residues are essential for the binding of calcium.

The protein resides in the endoplasmic reticulum-Golgi intermediate compartment membrane. Its subcellular location is the cell membrane. In terms of biological role, may control axon guidance across the CNS. Prevents the delivery of ROBO1 at the cell surface and down-regulates its expression. In Mus musculus (Mouse), this protein is Transmembrane gamma-carboxyglutamic acid protein 4 (Prrg4).